The sequence spans 405 residues: uncharacterized protein (405 aa).

This sequence belongs to the UDP-glycosyltransferase family.

This is an uncharacterized protein from Bacillus subtilis (strain 168).